An 817-amino-acid chain; its full sequence is Exocyst complex component 6 (817 aa).

2 coiled-coil regions span residues 87–149 (QSFV…DQIA) and 247–270 (TDAERAKKIQEEARKNASNVEIEV).

Belongs to the SEC15 family. In terms of assembly, the exocyst complex is composed of sec-3/exoc1, sec-5/exoc2, sec-6/exoc3, sec-8/exoc4, sec-10/exoc5, sec-15/exoc6, exo-70/exoc7 and exo-84/exoc8.

Functionally, component of the exocyst complex involved in the docking of exocytic vesicles with fusion sites on the plasma membrane. This Caenorhabditis elegans protein is Exocyst complex component 6 (sec-15).